The sequence spans 954 residues: Kinesin-like protein KIN-14A (954 aa).

Positions A24–E142 constitute a Calponin-homology (CH) domain. The stretch at L242 to D293 forms a coiled coil. One can recognise a Kinesin motor domain in the interval N332 to V651. An ATP-binding site is contributed by G413–T420. Positions A656–K692 form a coiled coil. The segment covering V697–P709 has biased composition (basic and acidic residues). Disordered regions lie at residues V697–N743, N824–I858, and P882–L954. 2 stretches are compositionally biased toward polar residues: residues D831 to K849 and A886 to T898.

The protein belongs to the TRAFAC class myosin-kinesin ATPase superfamily. Kinesin family. KIN-14 subfamily.

The sequence is that of Kinesin-like protein KIN-14A from Oryza sativa subsp. japonica (Rice).